The following is a 326-amino-acid chain: ELMO domain-containing protein 1 (326 aa).

Residues 133-306 (QHEEMLLKLW…KFRKRIIKQL (174 aa)) form the ELMO domain.

Its function is as follows. Acts as a GTPase-activating protein (GAP) toward guanine nucleotide exchange factors like ARL2, ARL3, ARF1 and ARF6, but not for GTPases outside the Arf family. This Pongo abelii (Sumatran orangutan) protein is ELMO domain-containing protein 1 (ELMOD1).